We begin with the raw amino-acid sequence, 297 residues long: MDGDGDPESVSHPEEASPEEQPEEAGAEASAEEEQLREAEEEEEAEAVEYLAELPEPLLLRVLAELPATELVQACRLVCLRWKELVDGAPLWLLKCQQEGLVPEGSADEERDHWQQFYFLSKRRRNLLRNPCGEEDLEGWSDVEHGGDGWRVEELPGDNGVEFTQDDSVKKYFASSFEWCRKAQVIDLQAEGYWEELLDTTQPAIVVKDWYSGRTDAGSLYELTVRLLSENEDVLAEFATGQVAVPEDGSWMEISHTFIDYGPGVRFVRFEHGGQDSVYWKGWFGARVTNSSVWVEP.

A disordered region spans residues 1-47 (MDGDGDPESVSHPEEASPEEQPEEAGAEASAEEEQLREAEEEEEAEA). Residues 16–47 (ASPEEQPEEAGAEASAEEEQLREAEEEEEAEA) show a composition bias toward acidic residues. The region spanning 48–95 (VEYLAELPEPLLLRVLAELPATELVQACRLVCLRWKELVDGAPLWLLK) is the F-box domain. The residue at position 106 (Ser-106) is a Phosphoserine. Residues 117-297 (FYFLSKRRRN…VTNSSVWVEP (181 aa)) form the FBA domain. A carbohydrate contacts are provided by residues 214–216 (RTD) and 279–280 (YW).

In terms of assembly, component of the SCF(FBXO2) complex consisting of CUL1, RBX1, SKP1 and FBXO2. Predominantly detected as heterodimer with SKP1; the heterodimer with SKP1 is not part of the SCF(FBXO2) complex. Detected in brain and cochlea, in epithelial support cells and hair cells of the organ of Corti (at protein level).

It is found in the cytoplasm. The protein resides in the microsome membrane. It participates in protein modification; protein ubiquitination. Substrate recognition component of a SCF (SKP1-CUL1-F-box protein) E3 ubiquitin-protein ligase complex that mediates the ubiquitination and subsequent proteasomal degradation of target proteins. Involved in the endoplasmic reticulum-associated degradation pathway (ERAD) for misfolded lumenal proteins by recognizing and binding sugar chains on unfolded glycoproteins that are retrotranslocated into the cytosol and promoting their ubiquitination and subsequent degradation. Prevents formation of cytosolic aggregates of unfolded glycoproteins that have been retrotranslocated into the cytosol. Able to recognize and bind denatured glycoproteins, preferentially those of the high-mannose type. The sequence is that of F-box only protein 2 (Fbxo2) from Mus musculus (Mouse).